Here is a 396-residue protein sequence, read N- to C-terminus: Elongation factor Tu (396 aa).

Residues 11–205 (KPHVNIGTIG…VIDEYIPTPV (195 aa)) form the tr-type G domain. The G1 stretch occupies residues 20–27 (GHVDHGKT). A GTP-binding site is contributed by 20–27 (GHVDHGKT). T27 contributes to the Mg(2+) binding site. Residues 61–65 (GITIN) are G2. The tract at residues 82–85 (DAPG) is G3. GTP contacts are provided by residues 82 to 86 (DAPGH) and 137 to 140 (NKTD). Positions 137-140 (NKTD) are G4. Residues 175-177 (SAL) form a G5 region.

It belongs to the TRAFAC class translation factor GTPase superfamily. Classic translation factor GTPase family. EF-Tu/EF-1A subfamily. In terms of assembly, monomer.

It localises to the cytoplasm. The enzyme catalyses GTP + H2O = GDP + phosphate + H(+). Its function is as follows. GTP hydrolase that promotes the GTP-dependent binding of aminoacyl-tRNA to the A-site of ribosomes during protein biosynthesis. The sequence is that of Elongation factor Tu from Oenococcus oeni (strain ATCC BAA-331 / PSU-1).